The primary structure comprises 463 residues: Cysteine--tRNA ligase (463 aa).

Cysteine 27 serves as a coordination point for Zn(2+). The 'HIGH' region motif lies at 29–39 (PTVYGLIHIGN). Zn(2+)-binding residues include cysteine 207, histidine 232, and glutamate 236. The short motif at 264-268 (KMSKS) is the 'KMSKS' region element. Lysine 267 is an ATP binding site.

It belongs to the class-I aminoacyl-tRNA synthetase family. Monomer. The cofactor is Zn(2+).

It localises to the cytoplasm. The enzyme catalyses tRNA(Cys) + L-cysteine + ATP = L-cysteinyl-tRNA(Cys) + AMP + diphosphate. This is Cysteine--tRNA ligase from Pseudothermotoga lettingae (strain ATCC BAA-301 / DSM 14385 / NBRC 107922 / TMO) (Thermotoga lettingae).